A 233-amino-acid polypeptide reads, in one-letter code: Lectin (233 aa).

Residues Asn26 and Asn108 are each glycosylated (N-linked (GlcNAc...) asparagine). Mn(2+) contacts are provided by Glu118 and Asp120. Ca(2+) is bound by residues Asp120, Trp122, Asn124, and Glu129. 2 residues coordinate Mn(2+): Glu129 and His134.

Belongs to the leguminous lectin family. Monomer.

It is found in the secreted. Functionally, has metal-independent hemagglutinating activity towards erythrocytes from rabbit and human. Hemagglutinating activity is inhibited by glycoproteins fetuin, asialo-fetuin, thyroglobulin and azocasein but not by free carbohydrates. Inhibits ADP- and epinephrin-induced but not collagen-, fibrinogen, thrombin- or arachidonic acid-induced platelet aggregation in vitro. Has anticoagulant activity in vitro. The polypeptide is Lectin (Bauhinia forficata (Brazilian orchid-tree)).